A 120-amino-acid chain; its full sequence is NAD(P)H-quinone oxidoreductase subunit 3, chloroplastic (120 aa).

3 consecutive transmembrane segments (helical) span residues isoleucine 9–glycine 29, methionine 64–methionine 84, and valine 88–leucine 108.

This sequence belongs to the complex I subunit 3 family. In terms of assembly, NDH is composed of at least 16 different subunits, 5 of which are encoded in the nucleus.

It is found in the plastid. The protein resides in the chloroplast thylakoid membrane. It catalyses the reaction a plastoquinone + NADH + (n+1) H(+)(in) = a plastoquinol + NAD(+) + n H(+)(out). The enzyme catalyses a plastoquinone + NADPH + (n+1) H(+)(in) = a plastoquinol + NADP(+) + n H(+)(out). NDH shuttles electrons from NAD(P)H:plastoquinone, via FMN and iron-sulfur (Fe-S) centers, to quinones in the photosynthetic chain and possibly in a chloroplast respiratory chain. The immediate electron acceptor for the enzyme in this species is believed to be plastoquinone. Couples the redox reaction to proton translocation, and thus conserves the redox energy in a proton gradient. This is NAD(P)H-quinone oxidoreductase subunit 3, chloroplastic from Barbarea verna (Land cress).